The primary structure comprises 71 residues: uncharacterized protein (71 aa).

Residues 2-24 (IIAIVAVVIFLLNFLTPYGYMPM) form a helical membrane-spanning segment. The disordered stretch occupies residues 48 to 71 (PAESSSNGGSMITKPSTGACQGGR). The segment covering 49–71 (AESSSNGGSMITKPSTGACQGGR) has biased composition (polar residues).

It is found in the membrane. This is an uncharacterized protein from Archaeoglobus fulgidus (strain ATCC 49558 / DSM 4304 / JCM 9628 / NBRC 100126 / VC-16).